Reading from the N-terminus, the 342-residue chain is tRNA N6-adenosine threonylcarbamoyltransferase (342 aa).

Residues His111 and His115 each coordinate Fe cation. Substrate is bound by residues 134–138 (LVSGG), Asp167, Gly180, and Asn272. Asp300 contacts Fe cation.

The protein belongs to the KAE1 / TsaD family. Fe(2+) is required as a cofactor.

The protein resides in the cytoplasm. It carries out the reaction L-threonylcarbamoyladenylate + adenosine(37) in tRNA = N(6)-L-threonylcarbamoyladenosine(37) in tRNA + AMP + H(+). In terms of biological role, required for the formation of a threonylcarbamoyl group on adenosine at position 37 (t(6)A37) in tRNAs that read codons beginning with adenine. Is involved in the transfer of the threonylcarbamoyl moiety of threonylcarbamoyl-AMP (TC-AMP) to the N6 group of A37, together with TsaE and TsaB. TsaD likely plays a direct catalytic role in this reaction. In Aromatoleum aromaticum (strain DSM 19018 / LMG 30748 / EbN1) (Azoarcus sp. (strain EbN1)), this protein is tRNA N6-adenosine threonylcarbamoyltransferase.